The following is a 121-amino-acid chain: Large ribosomal subunit protein uL18 (121 aa).

This sequence belongs to the universal ribosomal protein uL18 family. Part of the 50S ribosomal subunit; part of the 5S rRNA/L5/L18/L25 subcomplex. Contacts the 5S and 23S rRNAs.

This is one of the proteins that bind and probably mediate the attachment of the 5S RNA into the large ribosomal subunit, where it forms part of the central protuberance. The protein is Large ribosomal subunit protein uL18 of Delftia acidovorans (strain DSM 14801 / SPH-1).